A 113-amino-acid polypeptide reads, in one-letter code: Large ribosomal subunit protein P2 (113 aa).

The tract at residues 60 to 113 is disordered; sequence SKVSSLSAGAGPSGGAAAAGADAGAAEAEKEEEPQEEEADVNMGDIFGGDDEDY. Residues 74-85 show a composition bias toward low complexity; the sequence is GAAAAGADAGAA. The segment covering 88–99 has biased composition (acidic residues); sequence EKEEEPQEEEAD.

The protein belongs to the eukaryotic ribosomal protein P1/P2 family. As to quaternary structure, P1 and P2 exist as dimers at the large ribosomal subunit. In terms of processing, phosphorylated.

Plays an important role in the elongation step of protein synthesis. This chain is Large ribosomal subunit protein P2, found in Euplotes raikovi.